A 122-amino-acid chain; its full sequence is MSLTNEKIVEAIAEKSIMEVMELVKAIEDRFGVSAAAPVMVSGSAAAAAPVEEQTEFTVTLKEAGAKKVEVIKAVRAVTGLGLKEAKDLTEAGGILKEAVSKEEAEKVKKELEAAGATVEVK.

The protein belongs to the bacterial ribosomal protein bL12 family. In terms of assembly, homodimer. Part of the ribosomal stalk of the 50S ribosomal subunit. Forms a multimeric L10(L12)X complex, where L10 forms an elongated spine to which 2 to 4 L12 dimers bind in a sequential fashion. Binds GTP-bound translation factors.

Its function is as follows. Forms part of the ribosomal stalk which helps the ribosome interact with GTP-bound translation factors. Is thus essential for accurate translation. This Xylella fastidiosa (strain M23) protein is Large ribosomal subunit protein bL12.